Reading from the N-terminus, the 670-residue chain is MSLGPVGMSGGMDINSMVSKIVDAERVPKQQRIDNDRTTINASISAYGRLRESLDTMKNLMANFRQEKAFAVRTVETTDDNIVSATATTDAIAGKYAIDVLQLAQSHKVASDVLPEDAKFGPGKLQISLGDDRFNIEVRSRSKLIDVVRGINGAKDNPGVRASVINDVEGPRLILASNLSGKDHQIKVSVEAERGNPLKYFEYQTLEDRVNALEEARAAAEEVLGPLQAPQQPDQPEILDENGNPLPPEAQKAADNAQDDAQDDASQEPISAAGAEAAKAGQEAIDKANQRSSLRPEERIPGWTETASGTLLDSYEEPELELDEKAIEKAPDVPGWNNAASGTLTDSYVTTKEAKQLLEQEKAEIEQKIADEKQELDAKVERGELSEEQAKQIHRAKLDPQERERLEKIDEAEAKIAKAQSSFEEYLGMTEVQAGQDSEVLLDGVAKLSSHNNVIEDAIEGVDLTLKGKSEPNKPPAEIGVEYDRQSVRSDIENFVSAYNSFYQTSQALSSVDPTTGQKGPLAGDSTVRSADSRLKAVFSSRIDQAPENLKSLTEFGITTTRQGTLEINYDMLDRQLNNNFNELEKFFGGNTGFAKRIEDAIHGITGITGSIRTREKSLTEQNYRLNDDQAALDRRMEGLEKRTHAKFTAMQDATGKMQGQLGALMSALG.

The segment at 226 to 300 (PLQAPQQPDQ…RSSLRPEERI (75 aa)) is disordered. Residues 257–266 (AQDDAQDDAS) show a composition bias toward acidic residues. The segment covering 272–283 (AAGAEAAKAGQE) has biased composition (low complexity). Residues 284 to 300 (AIDKANQRSSLRPEERI) are compositionally biased toward basic and acidic residues. Positions 342–428 (GTLTDSYVTT…AQSSFEEYLG (87 aa)) form a coiled coil.

It belongs to the FliD family. In terms of assembly, homopentamer.

It is found in the secreted. The protein resides in the bacterial flagellum. In terms of biological role, required for the morphogenesis and for the elongation of the flagellar filament by facilitating polymerization of the flagellin monomers at the tip of growing filament. Forms a capping structure, which prevents flagellin subunits (transported through the central channel of the flagellum) from leaking out without polymerization at the distal end. Important for swimming motility. This is Polar flagellar hook-associated protein 2 (fliDP) from Vibrio parahaemolyticus serotype O3:K6 (strain RIMD 2210633).